The following is a 211-amino-acid chain: Transcriptional regulator GfcR (211 aa).

This sequence belongs to the purine/pyrimidine phosphoribosyltransferase family. GfcR subfamily.

DNA-binding transcriptional regulator that functions as a regulator of central sugar catabolic pathways. This is Transcriptional regulator GfcR from Halorubrum lacusprofundi (strain ATCC 49239 / DSM 5036 / JCM 8891 / ACAM 34).